The primary structure comprises 24 residues: Arginine attenuator peptide (24 aa).

It belongs to the arginine attenuator peptide family.

Arginine attenuator peptide (AAP) that has a regulatory role in the production of arginine-specific carbamoyl phosphate synthetase. Encoded by an upstream open reading frame (uORF) within the 5'-leader region of arginine-specific carbamoyl phosphate synthetase small chain (arg-2) mRNA, it attenuates the translation of the downstream arg-2 ORF. In the presence of high concentrations of arginine, ribosomes translating the uORF encoding AAP stall at the termination codon, resulting in reduced translation from the downstream arg-2 initiation codon. The chain is Arginine attenuator peptide from Neurospora crassa (strain ATCC 24698 / 74-OR23-1A / CBS 708.71 / DSM 1257 / FGSC 987).